A 347-amino-acid polypeptide reads, in one-letter code: Protein RecA (347 aa).

65–72 (GPESSGKT) lines the ATP pocket.

The protein belongs to the RecA family.

The protein resides in the cytoplasm. In terms of biological role, can catalyze the hydrolysis of ATP in the presence of single-stranded DNA, the ATP-dependent uptake of single-stranded DNA by duplex DNA, and the ATP-dependent hybridization of homologous single-stranded DNAs. It interacts with LexA causing its activation and leading to its autocatalytic cleavage. In Stutzerimonas stutzeri (Pseudomonas stutzeri), this protein is Protein RecA.